Consider the following 8525-residue polypeptide: Nebulin (8525 aa).

Positions 34-70 are disordered; that stretch reads TTTTRTSDYEQSETSKPALAQPALAQPASAKPVERRK. Residues 48–64 show a composition bias toward low complexity; it reads SKPALAQPALAQPASAK. 235 Nebulin repeats span residues 83 to 110, 112 to 146, 156 to 181, 182 to 216, 217 to 251, 252 to 286, 296 to 321, 323 to 357, 362 to 396, 403 to 431, 433 to 467, 501 to 535, 536 to 570, 572 to 606, 610 to 644, 680 to 714, 748 to 782, 783 to 817, 819 to 853, 857 to 891, 892 to 918, 923 to 957, 968 to 986, 992 to 1026, 1027 to 1061, 1063 to 1097, 1101 to 1135, 1136 to 1166, 1167 to 1201, 1212 to 1230, 1236 to 1270, 1271 to 1305, 1307 to 1341, 1345 to 1379, 1380 to 1407, 1411 to 1445, 1456 to 1474, 1480 to 1514, 1515 to 1549, 1551 to 1585, 1589 to 1623, 1624 to 1654, 1655 to 1689, 1697 to 1725, 1730 to 1758, 1759 to 1793, 1795 to 1829, 1833 to 1867, 1868 to 1894, 1899 to 1933, 1949 to 1962, 1968 to 2002, 2003 to 2037, 2039 to 2073, 2077 to 2111, 2112 to 2138, 2143 to 2177, 2188 to 2206, 2212 to 2246, 2247 to 2281, 2283 to 2317, 2321 to 2355, 2356 to 2382, 2387 to 2421, 2436 to 2449, 2455 to 2489, 2490 to 2524, 2526 to 2560, 2564 to 2598, 2599 to 2625, 2630 to 2664, 2679 to 2692, 2698 to 2732, 2733 to 2767, 2769 to 2803, 2807 to 2841, 2842 to 2868, 2873 to 2907, 2917 to 2935, 2941 to 2975, 2976 to 3010, 3012 to 3046, 3050 to 3084, 3085 to 3111, 3116 to 3150, 3158 to 3178, 3184 to 3218, 3219 to 3253, 3255 to 3289, 3293 to 3327, 3328 to 3354, 3359 to 3393, 3401 to 3421, 3427 to 3461, 3462 to 3496, 3498 to 3532, 3536 to 3570, 3571 to 3597, 3602 to 3636, 3643 to 3664, 3670 to 3704, 3705 to 3739, 3741 to 3775, 3779 to 3813, 3814 to 3840, 3845 to 3879, 3889 to 3907, 3913 to 3947, 3948 to 3982, 3984 to 4018, 4022 to 4056, 4057 to 4083, 4088 to 4122, 4132 to 4149, 4156 to 4190, 4191 to 4225, 4227 to 4261, 4265 to 4299, 4300 to 4326, 4331 to 4365, 4375 to 4392, 4399 to 4433, 4434 to 4468, 4470 to 4504, 4508 to 4542, 4543 to 4569, 4574 to 4608, 4618 to 4635, 4642 to 4676, 4677 to 4711, 4713 to 4747, 4751 to 4785, 4786 to 4812, 4817 to 4851, 4861 to 4878, 4885 to 4919, 4920 to 4954, 4956 to 4990, 4994 to 5028, 5029 to 5055, 5060 to 5094, 5104 to 5121, 5128 to 5162, 5163 to 5197, 5199 to 5233, 5237 to 5271, 5272 to 5298, 5303 to 5337, 5347 to 5364, 5371 to 5405, 5406 to 5440, 5442 to 5476, 5480 to 5514, 5515 to 5541, 5546 to 5580, 5588 to 5607, 5614 to 5648, 5649 to 5683, 5690 to 5718, 5722 to 5756, 5757 to 5783, 5788 to 5822, 5829 to 5853, 5856 to 5890, 5893 to 5924, 5926 to 5960, 5964 to 5998, 5999 to 6025, 6030 to 6064, 6071 to 6099, 6100 to 6134, 6135 to 6169, 6171 to 6205, 6209 to 6243, 6244 to 6274, 6275 to 6309, 6316 to 6344, 6345 to 6379, 6380 to 6414, 6416 to 6450, 6458 to 6488, 6489 to 6515, 6532 to 6554, 6561 to 6589, 6590 to 6624, 6626 to 6660, 6661 to 6695, 6697 to 6731, 6732 to 6766, 6767 to 6801, 6808 to 6836, 6837 to 6871, 6872 to 6906, 6907 to 6941, 6942 to 6976, 6977 to 7011, 7012 to 7046, 7053 to 7081, 7082 to 7110, 7125 to 7151, 7152 to 7186, 7188 to 7222, 7223 to 7257, 7258 to 7292, 7297 to 7327, 7328 to 7362, 7365 to 7399, 7402 to 7433, 7436 to 7470, 7479 to 7505, 7514 to 7542, 7543 to 7577, 7578 to 7612, 7619 to 7647, 7650 to 7684, 7687 to 7721, 7731 to 7759, 7760 to 7794, 7795 to 7829, 7830 to 7864, 7867 to 7888, 7892 to 7921, 7930 to 7957, 7961 to 7988, 7992 to 8013, 8016 to 8045, 8054 to 8075, 8078 to 8112, 8116 to 8143, 8147 to 8168, 8171 to 8205, 8209 to 8232, 8233 to 8267, 8269 to 8303, and 8304 to 8330; these read TPYIAHSQKMQDLFSPNKYKEKFEKTKG, PYASTTDTPELRRIKKVQDQLSEVKYRMDGDVAKT, DIEHAKKVSQQVSKVLYKQNWEDTKD, KYLLPPDAPELVQAVKNTAMFSKKLYTEDWEADKS, LFYPYNDSPELRRVAQAQKALSDVAYKKGLAEQQA, QFTPLADPPDIEFAKKVTNQVSKQKYKEDYENKIK, EVANARMNADNISTRKYQEDFENMKD, IYFMQTETPEYKMNKKAGVAASKVKYKEDYEKNKG, NVLPASENPQLRQLKAAGDALSDKLYKENYEKTKA, ETPKFKLDTVLQNFSSDKKYKDSYLKDIL, HYVGSFEDPYHSHCMKVTAQNSDKNYKAEYEEDRG, KFTQVTDSPVLLQAQVNSKQLSDLNYKAKHESEKF, KCHIPPDTPAFIQHKVNAYNLSDNLYKQDWEKSKA, KFDIKVDAIPLLAAKANTKNTSDVMYKKDYEKNKG, GVLSINDDPKMLHSLKVAKNQSDRLYKENYEKTKA, HYVGSMEDPYHTHCMKVAAQNSDKSYKAEYEEDKG, KFTAVTDSPVLLQAQLNTKQLSDLNYKAKHEGEKF, KCHIPADAPQFIQHRVNAYNLSDNVYKQDWEKSKA, KFDIKVDAIPLLAAKANTKNTSDVMYKKDYEKSKG, GALSINDDPKMLHSLKTAKNQSDREYRKDYEKSKT, IYTAPLDMLQVTQAKKSQAIASDVDYK, SYSYPPDSINVDLAKKAYALQSDVEYKADYNSWMK, EMEKAKRASDILNEKKYRQ, KFTSIEDAPITVQSKINQAQRSDIAYKAKGEEIIH, KYNLPPDLPQFIQAKVNAYNISENMYKADLKDLSK, GYDLRTDAIPIRAAKAARQAASDVQYKKDYEKAKG, GFQSLQDDPKLVHYMNVAKIQSDREYKKDYEKTKS, KYNTPHDMFNVVAAKKAQDVVSNVNYKHSLH, HYTYLPDAMDLELSKNMMQIQSDNVYKEDYNNWMK, DVEKVKKAGDALNEKKYRQ, KFTSIVDSPVMVQAKQNTKQVSDILYKAKGEDVKH, KYTMSPDLPQFLQAKCNAYNISDVCYKRDWYDLIA, GNNVLGDAIPITAAKASRNIASDYKYKEAYEKSKG, GFRSLQDDPKLVHYMNVAKLQSDREYKKNYENTKT, SYHTPGDMVSITAAKMAQDVATNVNYKQ, HYTYLPDAMSLEHTRNVNQIQSDNVYKDEYNSFLK, EVEKVKKAGDALNERKYRQ, KFTSVPDSMGMVLAQHNTKQLSDLNYKVEGEKLKH, KYTIDPELPQFIQAKVNALNMSDAHYKADWKKTIA, GYDLRPDAIPIVAAKSSRNIASDCKYKEAYEKAKG, GFLSLQDDPKLVHYMNVAKIQSDREYKKGYEASKT, KYHTPLDMVSVTAAKKSQEVATNANYRQSYH, HYTLLPDALNVEHSRNAMQIQSDNLYKSDFTNWMK, ESLEVEKAKKAGEILSEKKYRQHPEKLKF, DTMEQALNKSNKLNMDKRLYTEKWNKDKT, TIHVMPDTPDILLSRVNQITMSDKLYKAGWEEEKK, GYDLRPDAIAIKAARASRDIASDYKYKKAYEQAKG, GFRSLEDDPKLVHFMQVAKMQSDREYKKGYEKSKT, SFHTPVDMLSVVAAKKSQEVATNANYR, TYNMLPDAMSFELAKNMMQIQSDNQYKADYADFMK, KKAMEIISEKKYRQ, KYSTLMDSMNMVLAQNNAKIMNEHLYKQAWEADKT, KVHIMPDIPQIILAKANAINMSDKLYKLSLEESKK, GYDLRPDAIPIKAAKASRDIASDYKYKYNYEKGKG, GFRSLEDDPKLVHSMQVAKMQSDREYKKNYENTKT, SYHTPADMLSVTAAKDAQANITNTNYK, KYILLPDAMNIELTRNMNRIQSDNEYKQDYNEWYK, EVEKAKKATEYASDQKYRQ, QFKKLTDSMDMVLAKQNAHTMNKHLYTIDWNKDKT, KIHVMPDTPDILQAKQNQTLYSQKLYKLGWEEALK, GYDLPVDAISVQLAKASRDIASDYKYKQGYRKQLG, GFRSLQDDPKLVLSMNVAKMQSEREYKKDFEKWKT, KFSSPVDMLGVVLAKKCQELVSDVDYK, QWTCLPDQNDVVQAKKVYELQSENLYKSDLEWLRG, KRASEIISEKKYRQ, KFTSIPDAMDIVLAKTNAKNRSDRLYREAWDKDKT, QIHIMPDTPDIVLAKANLINTSDKLYRMGYEELKR, GYDLPVDAIPIKAAKASREIASEYKYKEGFRKQLG, GARNIEDDPKMMWSMHVAKIQSDREYKKDFEKWKT, KFSSPVDMLGVVLAKKCQTLVSDVDYK, QWTCLPDQSDVIHARQAYDLQSDNLYKSDLQWLKG, KRATQILSDHVYRQ, KFSSLMDSIPMVLAKNNAITMNHRLYTEAWDKDKT, TVHIMPDTPEVLLAKQNKVNYSEKLYKLGLEEAKR, GYDMRVDAIPIKAAKASRDIASEFKYKEGYRKQLG, GARAIRDDPKMMWSMHVAKIQSDREYKKDFEKWKT, QWTCLPDQSDVIHARQAYDLQSDNMYKSDLQWMRG, DVEKCKRATEILSDKIYRQ, KFTSVTDSLEQVLAKNNAITMNKRLYTEAWDKDKT, QIHIMPDTPEIMLARMNKINYSESLYKLANEEAKK, GYDLRSDAIPIVAAKASRDIISDYKYKDGYCKQLG, EWTCLPDQSDVIHARQAYDLQSDNIYKSDLQWLRG, SMDVVKCKRATEILSDNIYRQ, KFTSVTDSLEQVLAKNNALNMNKRLYTEAWDKDKT, QIHIMPDTPEIMLARQNKINYSETLYKLANEEAKK, GYDLRSDAIPIVAAKASRDVISDYKYKDGYRKQLG, EWTCLPDQNDVIHARQAYDLQSDNIYKSDLQWLRG, SMDVVKCKRAAEILSDNIYRQ, QVHIMPDTPEIMLARQNKINYSESLYRQAMEEAKK, GYDLRSDAIPIVAAKASRDIASDYKYKEAYRKQLG, GARAVHDDPKIMWSLHIAKVQSDREYKKDFEKYKT, RYSSPVDMLGIVLAKKCQTLVSDVDYK, EWICLPDQNDIIHARKAYDLQSDNLYKSDLEWMKG, DSLEVVRAKRAGELLSDTIYRQ, KFTSITDTPEQVLAKNNALNMNKRLYTEAWDNDKK, TIHVMPDTPEIMLAKLNRINYSDKLYKLALEESKK, GYDLRLDAIPIQAAKASRDIASDYKYKEGYRKQLG, GARNIKDDPKMMWSIHVAKIQSDREYKKEFEKWKT, KFSSPVDMLGVVLAKKCQILVSDIDYK, EWTCLPDQNDVIQARKAYDLQSDAIYKSDLEWLRG, EVEKVKRAGEILSDRKYRQ, KFTCITDTPEIVLAKNNALTMSKHLYTEAWDADKT, SIHVMPDTPDILLAKSNSANISQKLYTKGWDESKM, DYDLRADAISIKSAKASRDIASDYKYKEAYEKQKG, GAQSIEDDPKIMCAIHAGKIQSEREYKKEFQKWKT, KFSSPVDMLSILLAKKCQTLVTDIDYR, EWTCMPDQNDIIQAKKAYDLQSDSVYKADLEWLRG, EMNRVKVAQDLVNERLYR, SFTSIVDTPEVVLAKANSLQISEKLYQEAWNKDKS, NITIPSDTPEMLQAHINALQISNKLYQKDWNDAKQ, GYDIRADAIEIKHAKASREIASEYKYKEGYRKQLG, GFRTLQDDPKSVWAIHAAKIQSDREYKKAYEKSKG, IHNTPLDMMSIVQAKKCQVLVSDIDYR, QWTCLPDQNDVIQAKKAYDLQSDNLYKSDLEWLKG, EVMRVKNAQNLLNERLYR, KFTSIVDTPEVIQAKINAVQISEPLYRDAWEKEKA, NVNVPADTPLMLQSKINALQISNKRYQQAWEDVKM, GYDLRADAIGIQHAKASRDIASDYLYKTAYEKQKG, GCRSAKEDPKLVWAANVLKMQNDRLYKKAYNDHKA, KISIPVDMVSISAAKEGQALASDVDYR, HWSCFPDQNDVIQARKAYDLQSDSVYKADLEWLRG, NITIPSDTPEMLQAHINALQISNKLYQKDWNDTKQ, KFTSIVDTPEVIQAKINAVQISEPLYRNAWEKEKA, RWSCFPDQNDVIQARKAYDLQSDALYKADLEWLRG, SPEVLRVKNAQNIFCDSVYR, KYTSIVDTPEVVLAKSNAENISIPKYREVWDKDKT, SIHIMPDTPEINLARANALNVSNKLYREGWDEMKA, DAIPIQAAKASREIASDYKYKLDHEKQKG, GTLTARDDNKIRWALIADKLQNEREYRLDWAKWKA, KIQSPVDMLSILHSKNSQALVSDMDYR, QWTCMPDQNDVIQAKKAYELQSDNVYKADLEWLRG, DSVSVNHAKHAADIFSEKKYRTKIE, NFTPVDDRVDYVTAKQSGEILDDIKYRKDWNATKS, TLTETPLLHTAQEAARILDQYLYKEGWERQKA, GYILPPDAVPFVHAHHCNDVQSELKYKAEHVKQKG, GVPTMRDDPKLVWFEHAGQIQNERLYKEDYHKTKA, KINIPADMVSVLAAKQGQTLVSDIDYR, QWMCHPDQNDVIQARKAYDLQSDNVYRADLEWLRG, DSVDHVRVTKNQEMMSQIKYKKNALENYP, NFRSVVDPPEIVLAKINSVNQSDVKYKETFNKAKG, KYTFSPDTPHISHSKDMGKLYSTILYKGAWEGTKA, GYTLDERYIPIVGAKHADLVNSELKYKETYEKQKG, AGKVIGEFPGVVHCLDFQKMRSALNYRKHYEDTKA, NVHIPNDMMNHVLAKRCQYILSDLEYRHYFH, QWTSLLEEPNVIRVRNAQEILSDNVYKDDLNWLKG, DTPQILHAKKSYDLQSQLQYTAAGKENLQ, NYNLVTDTPLYVTAVQSGINASEVKYKENYHQIKD, KYTTVLETVDYDRTRNLKNLYSSNLYKEAWDRVKA, SYILPSSTLSLTHAKNQKHLASHIKYREEYEKFKA, VDDDPNTARCLRVGKLNIDRLYRSVYEKNKM, KIHIVPDMVEMVTAKDSQKKVSEIDYR, HVRKVTDQISDIVYKDDLNWLKG, DTPEILHAKHAYDLRDDIKYKAHMLKTRN, DYKLVTDTPVYVQAVKSGKQLSDAVYHYDYVHSVR, KVAPTTKTVDLDRALHAYKLQSSNLYKTSLRTLPT, GYRLPGDTPHFKHIKDTRYMSSYFKYKEAYEHTKA, GYTLGPKDVPFVHVRRVNNVTSERLYRELYHKLKD, KIHTTPDTPEIRQVKKTQEAVSELIYKSDFFKMQG, HMISLPYTPQVIHCRYVGDITSDIKYKEDLQVLKG, DTPDMVRSRHLRKLWSNYLYTDKARKMRD, KYKVVLDTPEYRKVQELKTHLSELVYRAAGKKQKS, IFTSVPDTPDLLRAKRGQKLQSQYLYVELATKERP, HHHAGNQTTALKHAKDVKDMVSEKKYKIQYEKMKD, KYTPVPDTPILIRAKRAYWNASDLRYKETFQKTKG, KYHTVKDALDIVYHRKVTDDISKIKYKENYMSQLG, IWRSIPDRPEHFHHRAVTDTVSDVKYKEDLTWLKG, DTPDFTLAEKNKTLYSKYKYKEVFERTKS, DFKYVADSPINRHFKYATQLMNERKYKSS, PDMLTALYNSHMWSQIKYRKNYEKSKD, KFTSIVDTPEHLRTTKVNKQISDILYKLEYNKAKP, GYTTIHDTPMLLHVRKVKDEVSDLKYKEVYQRNKS, NCTIEPDAVHIKAAKDAYKVNTNLDYKKQYEANKA, HWKWTPDRPDFLQAAKSSLQQSDFEYKLDREFLKG, VTDDKNTVLALRNTLIESDLKYKEKHVKERG, TCHAVPDTPQILLAKTVSNLVSENKYKDHVKKHLA, SYTTLPETRDTVHVKEVTKHVSDTNYKKKFVKEKG, NYSIMLEPPEVKHAMEVAKKQSDVAYRKDAKE, HYTTVADRPDIKKATQAAKQASEVEYRAKHRKEGS, PDIEMAKKAAKLSSQVKYRENFDKEKG, DSQLYKVMKDANNLASEVKYKADLKKLHK, PVTDMKESLIMNHVLNTSQLASSYQYKKKYEKSKG, HYHTIPDNLEQLHLKEATELQSIVKYKEKYEKERG, ETPTYITAKESQQMQSGKEYRKDYEESIK, NLTGLEVTPALLHVKYATKIASEKEYRKDLEESIR, GLTEMEDTPDMLRAKNATQILNEKEYKRDLELEVK, ETPDFMRARNATDIASQIKYKQSAEMEKA, NFTSVVDTPEIIHAQQVKNLSSQKKYKEDAEKSMS, YYETVLDTPEIQRVRENQKNFSLLQYQCDLKNSKG, KITVVQDTPEILRVKENQKNFSSVLYKEDVSPGTA, KTPEMMRVKQTQDHISSVKYKE, QGTPIPDLPEVKRVKETQKHISSVMYKENL, TPEIERVKRNQENFSSVLYKENLGKGIP, TPEMERVKRNQENFSSILYKENLSKGTP, TPEMERVKLNQENFSSVLYKEN, KGIPIPITPEMERVKHNQENFSSVLYKENL, TPEMQRVKHNQENLSSVLYKEN, KGTPLPVTPEMERVKHNQENISSVLYKENMGKGTP, TPEMERVKHNQENISSVLYKENMGKGTP, TPEMERVKHNQENISSVLYKEN, KATATPVTPEMQRVKRNQENISSVLYKENLGKATP, TPEMERVKRNQENFSSVLYKENMR, KATPTPVTPEMERAKRNQENISSVLYSDSFRKQIQ, KAAYVLDTPEMRRVRETQRHISTVKYHEDFEKHKG, and CFTPVVTDPITERVKKNMQDFSDINYR. Positions 8313–8468 are interaction with SVIL; that stretch reads ITERVKKNMQ…SIPSHPSTAG (156 aa). Disordered regions lie at residues 8385-8422 and 8439-8463; these read QAQRRSREQSRSASALSISGGEEKSEHSEAPDHHLSTY and TTELPQQRSSSVATQQTTVSSIPSH. Positions 8405–8419 are enriched in basic and acidic residues; the sequence is GEEKSEHSEAPDHHL. Over residues 8444–8459 the composition is skewed to low complexity; sequence QQRSSSVATQQTTVSS. The 60-residue stretch at 8466–8525 folds into the SH3 domain; sequence TAGKIFRAMYDYMAADADEVSFKDGDAIINVQAIDEGWMYGTVQRTGRTGMLPANYVEAI.

Monomer and homooligomer. Interacts with TTN/titin. Interacts with SVIL. Interacts (via nebulin repeats 160-164) with DES. In terms of tissue distribution, expressed in skeletal muscle (at protein level). Located in the thin filament of striated muscle.

It is found in the cytoplasm. It localises to the myofibril. The protein resides in the sarcomere. Its subcellular location is the cytoskeleton. In terms of biological role, this giant muscle protein may be involved in maintaining the structural integrity of sarcomeres and the membrane system associated with the myofibrils. Binds and stabilize F-actin. In Homo sapiens (Human), this protein is Nebulin (NEB).